Here is a 207-residue protein sequence, read N- to C-terminus: Ribosomal RNA small subunit methyltransferase G (207 aa).

S-adenosyl-L-methionine contacts are provided by residues G75, M80, 126 to 127 (VE), and R141.

This sequence belongs to the methyltransferase superfamily. RNA methyltransferase RsmG family.

The protein localises to the cytoplasm. The enzyme catalyses guanosine(527) in 16S rRNA + S-adenosyl-L-methionine = N(7)-methylguanosine(527) in 16S rRNA + S-adenosyl-L-homocysteine. Specifically methylates the N7 position of guanine in position 527 of 16S rRNA. The chain is Ribosomal RNA small subunit methyltransferase G from Laribacter hongkongensis (strain HLHK9).